We begin with the raw amino-acid sequence, 397 residues long: MNIHEYQAKALLKGYGAPVAEGVAILKVEEAEAAAKQLPGPLYVVKSQIHAGGRGKGKFKELGPDAKGGVRLAKSIEEVVSHSRDMLGNTLVTAQTGDAGKQVNRLYIEDGADIARELYCSLLVDRSVGQVAFVVSTEGGMDIEAVAHDTPEKIHTIAINPEKGVSDADVAAISKALELDGVAAEDAKALFPILYKAFNEKDMALLEVNPLIVMENGHLRVLDAKMSFDGNALFRHEDVKALRDETEEDAKEIEASKWDLAYVALDGNIGCMVNGAGLAMATMDIIKLYGKEPANFCDVGGGAGKEKVAAAFKIITADPKVEGILVNIFGGIMKCDVIAEGVIAAVKEVGLQVPLVVRLEGTNVELGKKLLNESGLAITAADDLDDAAKKIVAAING.

The ATP-grasp domain occupies 9-254 (KALLKGYGAP…ETEEDAKEIE (246 aa)). ATP is bound by residues K46, 53–55 (GRG), E109, A112, and E117. Positions 209 and 223 each coordinate Mg(2+). Residues N274 and 331-333 (GIM) each bind substrate.

This sequence belongs to the succinate/malate CoA ligase beta subunit family. In terms of assembly, heterotetramer of two alpha and two beta subunits. Mg(2+) is required as a cofactor.

It catalyses the reaction succinate + ATP + CoA = succinyl-CoA + ADP + phosphate. The catalysed reaction is GTP + succinate + CoA = succinyl-CoA + GDP + phosphate. Its pathway is carbohydrate metabolism; tricarboxylic acid cycle; succinate from succinyl-CoA (ligase route): step 1/1. In terms of biological role, succinyl-CoA synthetase functions in the citric acid cycle (TCA), coupling the hydrolysis of succinyl-CoA to the synthesis of either ATP or GTP and thus represents the only step of substrate-level phosphorylation in the TCA. The beta subunit provides nucleotide specificity of the enzyme and binds the substrate succinate, while the binding sites for coenzyme A and phosphate are found in the alpha subunit. The chain is Succinate--CoA ligase [ADP-forming] subunit beta from Agrobacterium fabrum (strain C58 / ATCC 33970) (Agrobacterium tumefaciens (strain C58)).